The following is a 791-amino-acid chain: MEESSLEILEFDKIIDRVQEFAATIIGKEIISRLQPVDNLNYVKNKLREVSSAREILEEYGRPPFGGIRDLREIIEKADKGIVLSVKEVMDVRSTLEGVRELKKYSREIGTGIDDELQDIYSIITEKFDRLTPLKQLENEINRCIDEHGEIKDSASRKLRSIRREMDRIEGKINDKLNSIINNTRYQEMLQDKLVTIRGNRYVVPVKSSYKNTFSGIVHDQSTSGLTYFMEPMAIVKLNNRLGELKRAEEQEIYRILKKLSENIKEHTRDLSDNLEMVSLLDVDFARARFSIEIEGIEPGINDKGFINIRGGRHPLLKVKPVPIDITVGNEFKTLVITGPNTGGKTVALKTVGLFVLMVQAGLHIPAEEETVISIFNGVYADIGDEQSIEQNLSTFSSHINRIKRFLGKADARSLVLLDEIGVGTDPREGAALGVAILEHLRERGVTTIATTHYSEIKSYAYSQDGVENASVEFDMETLQPTYRLLMGIPGGSNAFEIALKLGLPHDIIKDGKELMSGDDIKVENIISDLNEERKKYEQLKIEIEERLEAVKKKEQKYDSLLTDLEKRKKKLITEAREEALQIIKKTRKESKEILRRLKNKEFASRSDIDRVENEINLNLKETEKEISEKRQNKDGRTRVKEISCGDQVRLKKTGQKGEVISVDREKGEAVIQAGIMKVTTGLDEVAKIDIPDDTKDELFHSYQVKKKSRVSPTLDLRGERYETAQHKLDKYLDDVFLAGLKQVEIIHGKGTGALRKAVHTVLEKNPHITSYRLGRQEEGGSGVTIADLKS.

Gly339–Thr346 is an ATP binding site. A Smr domain is found at Leu715–Lys790.

This sequence belongs to the DNA mismatch repair MutS family. MutS2 subfamily. Homodimer. Binds to stalled ribosomes, contacting rRNA.

Its function is as follows. Endonuclease that is involved in the suppression of homologous recombination and thus may have a key role in the control of bacterial genetic diversity. Functionally, acts as a ribosome collision sensor, splitting the ribosome into its 2 subunits. Detects stalled/collided 70S ribosomes which it binds and splits by an ATP-hydrolysis driven conformational change. Acts upstream of the ribosome quality control system (RQC), a ribosome-associated complex that mediates the extraction of incompletely synthesized nascent chains from stalled ribosomes and their subsequent degradation. Probably generates substrates for RQC. The sequence is that of Endonuclease MutS2 from Halothermothrix orenii (strain H 168 / OCM 544 / DSM 9562).